The sequence spans 133 residues: Transmembrane protein 60 (133 aa).

4 helical membrane passes run 5–25 (LAQR…MLVL), 35–55 (WFLI…MLIV), 78–98 (AWYL…CAKL), and 110–130 (FIPL…NVFF).

The protein localises to the membrane. The sequence is that of Transmembrane protein 60 (Tmem60) from Mus musculus (Mouse).